The chain runs to 141 residues: UPF0179 protein Cmaq_1008 (141 aa).

The protein belongs to the UPF0179 family.

The chain is UPF0179 protein Cmaq_1008 from Caldivirga maquilingensis (strain ATCC 700844 / DSM 13496 / JCM 10307 / IC-167).